Here is a 140-residue protein sequence, read N- to C-terminus: MGMVSEFKQFAIRGNVIDLAVGVVIGAAFGKIVTALVEKIIMPPIGWAIGNVDFSRLAWVLKPAGVDATGKDIPAVAIGYGDFINTVVQFVIIAFAIFLLVKLINRVTNRKPDAPKGPSEEVLLLREIRDSLKNDTLKSG.

A run of 2 helical transmembrane segments spans residues 16 to 36 and 84 to 104; these read VIDLAVGVVIGAAFGKIVTAL and INTVVQFVIIAFAIFLLVKLI.

This sequence belongs to the MscL family. As to quaternary structure, homopentamer.

The protein resides in the cell inner membrane. Its function is as follows. Channel that opens in response to stretch forces in the membrane lipid bilayer. May participate in the regulation of osmotic pressure changes within the cell. The chain is Large-conductance mechanosensitive channel from Xanthomonas oryzae pv. oryzae (strain PXO99A).